Reading from the N-terminus, the 22-residue chain is MICOS complex subunit MIC60 (22 aa).

Belongs to the MICOS complex subunit Mic60 family. As to quaternary structure, component of the mitochondrial contact site and cristae organizing system (MICOS) complex, composed of at least MICOS10/MIC10, CHCHD3/MIC19, CHCHD6/MIC25, APOOL/MIC27, IMMT/MIC60, APOO/MIC23/MIC26 and MICOS13/MIC13. This complex was also known under the names MINOS or MitOS complex. The MICOS complex associates with mitochondrial outer membrane proteins SAMM50, MTX1 and MTX2 (together described as components of the mitochondrial outer membrane sorting assembly machinery (SAM) complex) and DNAJC11, mitochondrial inner membrane protein TMEM11 and with HSPA9. The MICOS and SAM complexes together with DNAJC11 are part of a large protein complex spanning both membranes termed the mitochondrial intermembrane space bridging (MIB) complex. Interacts with HSPA1A/HSPA1B and OPA1, preferentially with the soluble OPA1 form. Interacts with MICOS13/MIC13, MICOS10/MIC10, CHCHD3/MIC19, CHCHD6/MIC25, SAMM50 and TMEM11. Interacts with APOO/MIC23/MIC26 and APOOL/MIC27. Interacts with ARMC1. Interacts with ARMC12.

It localises to the mitochondrion inner membrane. It is found in the mitochondrion. Functionally, component of the MICOS complex, a large protein complex of the mitochondrial inner membrane that plays crucial roles in the maintenance of crista junctions, inner membrane architecture, and formation of contact sites to the outer membrane. Plays an important role in the maintenance of the MICOS complex stability and the mitochondrial cristae morphology. The chain is MICOS complex subunit MIC60 from Mesocricetus auratus (Golden hamster).